An 86-amino-acid chain; its full sequence is Large ribosomal subunit protein bL31 (86 aa).

Residues cysteine 16, cysteine 18, cysteine 38, and cysteine 41 each coordinate Zn(2+).

The protein belongs to the bacterial ribosomal protein bL31 family. Type A subfamily. In terms of assembly, part of the 50S ribosomal subunit. It depends on Zn(2+) as a cofactor.

Binds the 23S rRNA. This Acidothermus cellulolyticus (strain ATCC 43068 / DSM 8971 / 11B) protein is Large ribosomal subunit protein bL31.